The primary structure comprises 1481 residues: Cystic fibrosis transmembrane conductance regulator (1481 aa).

At 1–77 (MQRSPLEKAS…KLINALRRCF (77 aa)) the chain is on the cytoplasmic side. A helical transmembrane segment spans residues 78–98 (FWRFMFYGIILYLGEVTKAVQ). Residues 81–365 (FMFYGIILYL…WAVQTWYDSL (285 aa)) enclose the ABC transmembrane type-1 1 domain. Topologically, residues 99 to 122 (PLLLGRIIASYDPDNKVERSIAIY) are extracellular. Residues 123–146 (LGIGLCLLFIVRTLLLHPAIFGLH) traverse the membrane as a helical segment. Residues 147–195 (HIGMQMRIAMFSLIYKKTLKLSSRVLDKISIGQLVSLLSNNLNKFDEGL) lie on the Cytoplasmic side of the membrane. The helical transmembrane segment at 196–216 (ALAHFVWIAPLQVTLLMGLLW) threads the bilayer. Topologically, residues 217 to 222 (ELLQAF) are extracellular. Residues 223–243 (TFCGLAFLVVLAFLQAGLGKM) traverse the membrane as a helical segment. Over 244 to 298 (MMKYRDQRAGKINERLVITSEIIENIQSVKAYCWEEAMEKIIENLRQTELKLTRK) the chain is Cytoplasmic. The helical transmembrane segment at 299-319 (AAYVRYLNSSAFFFSGFFVVF) threads the bilayer. The Extracellular segment spans residues 320-339 (LSVLPYALLKGIILRKIFTT). Residues 340-358 (ISFCIVLRMAVTRQFPWAV) form a helical membrane-spanning segment. The Cytoplasmic segment spans residues 359-858 (QTWYDSLGAI…YLRYITVHKS (500 aa)). ATP is bound by residues Trp-401, 457–464 (GSTGAGKT), and Gln-492. The 223-residue stretch at 423–645 (NGDNNLFFSN…RPDFSSKLMG (223 aa)) folds into the ABC transporter 1 domain. Cys-523 is lipidated: S-palmitoyl cysteine. Phosphoserine occurs at positions 548 and 659. Residues 653–831 (TAERRNSIIT…EEINEEDLRD (179 aa)) are disordered R region. The residue at position 669 (Ser-669) is a Phosphoserine; by PKA. At Ser-685 the chain carries Phosphoserine. Lys-687 is covalently cross-linked (Glycyl lysine isopeptide (Lys-Gly) (interchain with G-Cter in ubiquitin)). A phosphoserine mark is found at Ser-699 and Ser-711. Thr-716 is modified (phosphothreonine). 5 positions are modified to phosphoserine: Ser-736, Ser-767, Ser-790, Ser-795, and Ser-813. Residues 859 to 879 (LMFVLIWCLVVFLAEVAASLV) traverse the membrane as a helical segment. The ABC transmembrane type-1 2 domain maps to 859-1155 (LMFVLIWCLV…AVNSSIDVDS (297 aa)). Residues 880–918 (VLCLFPKILFQDKGNSTKSANNSYAVIITSTSSYYIFYI) are Extracellular-facing. N-linked (GlcNAc...) asparagine glycosylation is found at Asn-894 and Asn-900. Residues 919-939 (YVGVADTLLALGLFRGLPLVH) traverse the membrane as a discontinuously helical segment. The Cytoplasmic portion of the chain corresponds to 940–990 (TLITVSKTLHHKMLQSVLQAPMSTLNTLKTGGILNRFSKDIAVLDDLLPLT). A helical membrane pass occupies residues 991-1011 (IFDFVQLLLIVIGAVVVVSVL). Residues 1012 to 1013 (QP) lie on the Extracellular side of the membrane. A helical membrane pass occupies residues 1014 to 1034 (YIFLATVPVIAAFILLRAYFL). Residues 1035–1095 (HTSQQLKQLE…TANWFLYLST (61 aa)) lie on the Cytoplasmic side of the membrane. Residues 1096–1116 (LRWFQMRIEMIFVIFFIAVTF) form a helical membrane-spanning segment. Topologically, residues 1117 to 1130 (ISILTTGEGEGRVG) are extracellular. Residues 1131-1151 (IILTLAMNIMGTLQWAVNSSI) form a helical membrane-spanning segment. Topologically, residues 1152–1481 (DVDSLMRSVS…TEEEVQETKL (330 aa)) are cytoplasmic. The ABC transporter 2 domain occupies 1211 to 1444 (MTVKDLTAKY…KSLFRQAISP (234 aa)). ATP contacts are provided by residues Tyr-1220 and 1245 to 1252 (GRTGSGKS). An interaction with GORASP2 region spans residues 1387–1481 (RTLKQAFADC…TEEEVQETKL (95 aa)). Residue Cys-1396 is the site of S-palmitoyl cysteine attachment. Residues 1452-1481 (PQRNSSRQKSRSNIAALKEETEEEVQETKL) are disordered. Over residues 1453 to 1464 (QRNSSRQKSRSN) the composition is skewed to low complexity. Ser-1457 is subject to Phosphoserine. Residues 1471-1481 (ETEEEVQETKL) show a composition bias toward acidic residues. The short motif at 1479–1481 (TKL) is the PDZ-binding element.

This sequence belongs to the ABC transporter superfamily. ABCC family. CFTR transporter (TC 3.A.1.202) subfamily. As to quaternary structure, monomer; does not require oligomerization for channel activity. May form oligomers in the membrane. Interacts with SLC26A3, SLC26A6 and NHERF1. Interacts with SHANK2. Interacts with MYO6. Interacts (via C-terminus) with GOPC (via PDZ domain); this promotes CFTR internalization and thereby decreases channel activity. Interacts with SLC4A7 through NHERF1. Found in a complex with MYO5B and RAB11A. Interacts with ANO1. Interacts with SLC26A8. Interacts with AHCYL1; the interaction increases CFTR activity. Interacts with CSE1L. The core-glycosylated form interacts with GORASP2 (via PDZ GRASP-type 1 domain) in respone to ER stress. Interacts with MARCHF2; the interaction leads to CFTR ubiqtuitination and degradation. Interacts with ADGRG2. In terms of processing, N-glycosylated. Post-translationally, phosphorylated; cAMP treatment promotes phosphorylation and activates the channel. Dephosphorylation decreases the ATPase activity (in vitro). Phosphorylation at PKA sites activates the channel. Phosphorylation at PKC sites enhances the response to phosphorylation by PKA. Phosphorylated by AMPK; this inhibits channel activity. Ubiquitinated, leading to its degradation in the lysosome. Deubiquitination by USP10 in early endosomes enhances its endocytic recycling to the cell membrane. Ubiquitinated by RNF185 during ER stress. Ubiquitinated by MARCHF2.

The protein resides in the apical cell membrane. The protein localises to the early endosome membrane. It localises to the cell membrane. It is found in the recycling endosome membrane. Its subcellular location is the endoplasmic reticulum membrane. The protein resides in the nucleus. It carries out the reaction ATP + H2O + closed Cl(-) channel = ADP + phosphate + open Cl(-) channel.. The catalysed reaction is chloride(in) = chloride(out). It catalyses the reaction hydrogencarbonate(in) = hydrogencarbonate(out). The enzyme catalyses ATP + H2O = ADP + phosphate + H(+). Its function is as follows. Epithelial ion channel that plays an important role in the regulation of epithelial ion and water transport and fluid homeostasis. Mediates the transport of chloride ions across the cell membrane. Possesses an intrinsic ATPase activity and utilizes ATP to gate its channel; the passive flow of anions through the channel is gated by cycles of ATP binding and hydrolysis by the ATP-binding domains. The ion channel is also permeable to HCO(3)(-); selectivity depends on the extracellular chloride concentration. Exerts its function also by modulating the activity of other ion channels and transporters. Contributes to the regulation of the pH and the ion content of the epithelial fluid layer. Modulates the activity of the epithelial sodium channel (ENaC) complex, in part by regulating the cell surface expression of the ENaC complex. May regulate bicarbonate secretion and salvage in epithelial cells by regulating the transporter SLC4A7. Can inhibit the chloride channel activity of ANO1. Plays a role in the chloride and bicarbonate homeostasis during sperm epididymal maturation and capacitation. The polypeptide is Cystic fibrosis transmembrane conductance regulator (Muntiacus muntjak (Barking deer)).